Reading from the N-terminus, the 75-residue chain is Alpha-amylase inhibitor Paim-2 (75 aa).

Cystine bridges form between Cys10–Cys26 and Cys44–Cys72.

Its function is as follows. Inhibits mammalian alpha-amylases specifically but has no action on plant and microbial alpha-amylases. This is Alpha-amylase inhibitor Paim-2 from Streptomyces olivaceoviridis (Streptomyces corchorusii).